Reading from the N-terminus, the 143-residue chain is Phosphatidylethanolamine-binding protein homolog R644 (143 aa).

The protein belongs to the phosphatidylethanolamine-binding protein family.

It is found in the virion. The polypeptide is Phosphatidylethanolamine-binding protein homolog R644 (Acanthamoeba polyphaga mimivirus (APMV)).